Consider the following 540-residue polypeptide: MSSEVKSFSKFRGYFFPIYRSEFSKFIPLFFLAFFVGVNYALLKTTKDSLVLVGSRAGAEVIPFLKVWGIVPGAVIVTMIYGWMSRRYSRGTVFISLVGGFLGFFALFATVIYPIGDALHLNKLAAKLQSILPPGGRGFVVMVQYWSYSLYYVMSELWSSIVLSTLFWGVANHITSVREAGRFYALINTGLNLSSVFAGEVSLWLGRNPVIAFPMAVDPWHEVLLNITLLIVLAGGVILYLYQKLDRLMDETSMLKEGLAAEMSVAQLKKEKKRSKAKAKSLFALLLRSRYLLGIAVVVLSYNLVIHLFEVVWKDQVCRIYASRVEFNSYMSRITTLTGIVSALTGIFAAGQTIRRWGWTIGALVPPLTMLITGALFFGAIYAVKGDAMIFGGILGISPLVLTAWLGGVQNVFSRAIKFTYFDQTKEMAFIPLEDDEKNYGKAAIDGVISRVGKSGGSLVYQGLLIIFSSVAASLNAITIVLLLALGSWIFVIAWLGREYTAKTEALFRVNVSEEDVLQEEREASSLVDAESREEPVTTL.

Transmembrane regions (helical) follow at residues 23–43 (FSKF…YALL), 61–81 (VIPF…TMIY), 93–113 (VFIS…TVIY), 150–170 (LYYV…FWGV), 185–205 (ALIN…SLWL), 222–242 (EVLL…LYLY), 292–312 (LLGI…FEVV), 334–354 (ITTL…GQTI), 361–381 (IGAL…FGAI), 389–409 (MIFG…LGGV), 455–475 (SGGS…AASL), and 477–497 (AITI…AWLG).

The protein belongs to the ADP/ATP translocase tlc family.

It is found in the cell membrane. This is ADP,ATP carrier protein 2 (tlcB) from Chlamydia trachomatis serovar D (strain ATCC VR-885 / DSM 19411 / UW-3/Cx).